The sequence spans 443 residues: Chromosomal replication initiator protein DnaA (443 aa).

Residues 1-73 (MYGDYRQIWE…YDAASKVTNR (73 aa)) form a domain I, interacts with DnaA modulators region. The segment at 73–106 (RFIEIKILSEDEEEYREIKESIERENSSESTLLS) is domain II. The domain III, AAA+ region stretch occupies residues 107 to 323 (TLNPKYTFDT…GALIRIVAFA (217 aa)). ATP contacts are provided by Gly-151, Gly-153, Lys-154, and Thr-155. The interval 324–443 (TLTKSNIDLE…EELKKRIKGY (120 aa)) is domain IV, binds dsDNA.

Belongs to the DnaA family. As to quaternary structure, oligomerizes as a right-handed, spiral filament on DNA at oriC.

It is found in the cytoplasm. In terms of biological role, plays an essential role in the initiation and regulation of chromosomal replication. ATP-DnaA binds to the origin of replication (oriC) to initiate formation of the DNA replication initiation complex once per cell cycle. Binds the DnaA box (a 9 base pair repeat at the origin) and separates the double-stranded (ds)DNA. Forms a right-handed helical filament on oriC DNA; dsDNA binds to the exterior of the filament while single-stranded (ss)DNA is stabiized in the filament's interior. The ATP-DnaA-oriC complex binds and stabilizes one strand of the AT-rich DNA unwinding element (DUE), permitting loading of DNA polymerase. After initiation quickly degrades to an ADP-DnaA complex that is not apt for DNA replication. Binds acidic phospholipids. In Caldanaerobacter subterraneus subsp. tengcongensis (strain DSM 15242 / JCM 11007 / NBRC 100824 / MB4) (Thermoanaerobacter tengcongensis), this protein is Chromosomal replication initiator protein DnaA.